Reading from the N-terminus, the 156-residue chain is 6,7-dimethyl-8-ribityllumazine synthase (156 aa).

5-amino-6-(D-ribitylamino)uracil contacts are provided by residues phenylalanine 22, 57-59 (AVE), and 81-83 (SVI). 86 to 87 (GT) lines the (2S)-2-hydroxy-3-oxobutyl phosphate pocket. Catalysis depends on histidine 89, which acts as the Proton donor. Phenylalanine 114 provides a ligand contact to 5-amino-6-(D-ribitylamino)uracil. Arginine 128 serves as a coordination point for (2S)-2-hydroxy-3-oxobutyl phosphate.

This sequence belongs to the DMRL synthase family. In terms of assembly, forms an icosahedral capsid composed of 60 subunits, arranged as a dodecamer of pentamers.

The catalysed reaction is (2S)-2-hydroxy-3-oxobutyl phosphate + 5-amino-6-(D-ribitylamino)uracil = 6,7-dimethyl-8-(1-D-ribityl)lumazine + phosphate + 2 H2O + H(+). It participates in cofactor biosynthesis; riboflavin biosynthesis; riboflavin from 2-hydroxy-3-oxobutyl phosphate and 5-amino-6-(D-ribitylamino)uracil: step 1/2. Functionally, catalyzes the formation of 6,7-dimethyl-8-ribityllumazine by condensation of 5-amino-6-(D-ribitylamino)uracil with 3,4-dihydroxy-2-butanone 4-phosphate. This is the penultimate step in the biosynthesis of riboflavin. This chain is 6,7-dimethyl-8-ribityllumazine synthase, found in Aliivibrio salmonicida (strain LFI1238) (Vibrio salmonicida (strain LFI1238)).